Consider the following 399-residue polypeptide: Telomeric repeat-binding factor 2-interacting protein 1 (399 aa).

A disordered region spans residues 1-21; that stretch reads MAEAMELGKDPNGPTHSSTLF. Position 2 is an N-acetylalanine (A2). Residues 10-101 enclose the BRCT domain; that stretch reads DPNGPTHSST…EKLELEAYRL (92 aa). Phosphoserine is present on residues S36 and S43. K114 is covalently cross-linked (Glycyl lysine isopeptide (Lys-Gly) (interchain with G-Cter in SUMO2)). Positions 130 to 190 constitute a Myb-like domain; that stretch reads QSQAGRMVFT…SMKDRYLKRL (61 aa). 2 positions are modified to phosphoserine: S156 and S158. K196 participates in a covalent cross-link: Glycyl lysine isopeptide (Lys-Gly) (interchain with G-Cter in SUMO2). 2 disordered regions span residues 199 to 245 and 279 to 309; these read LGEA…KEEI and TMCD…VSAP. Residues S205 and S208 each carry the phosphoserine modification. Residues K210, K214, and K242 each participate in a glycyl lysine isopeptide (Lys-Gly) (interchain with G-Cter in SUMO2) cross-link. The span at 281 to 304 shows a compositional bias: acidic residues; that stretch reads CDDDPCTPEEDSETQPDEEEEEEE. Residue K372 forms a Glycyl lysine isopeptide (Lys-Gly) (interchain with G-Cter in SUMO2) linkage. The Nuclear localization signal motif lies at 383–399; that stretch reads KKFGAQNVARRIEFRKK.

The protein belongs to the RAP1 family. Associates with the I-kappa-B-kinase (IKK) core complex, composed of CHUK, IKBKB and IKBKG. Homodimer. Component of the shelterin complex (telosome) composed of TERF1, TERF2, TINF2, TERF2IP ACD and POT1. Interacts with TERF2 (but not TERF1) with its C-terminus. Interacts with SLX4/BTBD12. Interacts with TERF2; the interaction is direct.

Its subcellular location is the nucleus. The protein localises to the cytoplasm. It is found in the chromosome. It localises to the telomere. Acts both as a regulator of telomere function and as a transcription regulator. Involved in the regulation of telomere length and protection as a component of the shelterin complex (telosome). In contrast to other components of the shelterin complex, it is dispensible for telomere capping and does not participate in the protection of telomeres against non-homologous end-joining (NHEJ)-mediated repair. Instead, it is required to negatively regulate telomere recombination and is essential for repressing homology-directed repair (HDR), which can affect telomere length. Does not bind DNA directly: recruited to telomeric double-stranded 5'-TTAGGG-3' repeats via its interaction with TERF2. Independently of its function in telomeres, also acts as a transcription regulator: recruited to extratelomeric 5'-TTAGGG-3' sites via its association with TERF2 or other factors, and regulates gene expression. When cytoplasmic, associates with the I-kappa-B-kinase (IKK) complex and acts as a regulator of the NF-kappa-B signaling by promoting IKK-mediated phosphorylation of RELA/p65, leading to activate expression of NF-kappa-B target genes. The polypeptide is Telomeric repeat-binding factor 2-interacting protein 1 (TERF2IP) (Bos taurus (Bovine)).